Here is a 673-residue protein sequence, read N- to C-terminus: Centrosomal protein kizuna (673 aa).

Disordered stretches follow at residues 175-207 (TEHK…TDSC), 255-413 (GSNT…ALKL), 432-480 (QTLS…NSVK), 494-516 (ECGR…ILND), and 613-673 (SEAS…DFYD). Composition is skewed to polar residues over residues 196–207 (QTAQSSNVTDSC) and 255–266 (GSNTRHGKSNLS). Composition is skewed to basic and acidic residues over residues 267–293 (EGKK…DLKC) and 303–316 (ILTR…EKRA). A phosphoserine mark is found at Ser317 and Ser321. A compositionally biased stretch (basic and acidic residues) spans 331 to 357 (SENKWSQEKHSPWEGVSDHLAHREPKS). A Phosphothreonine; by PLK1 modification is found at Thr379. Basic and acidic residues predominate over residues 471–480 (TLKEHDNSVK). 2 stretches are compositionally biased toward low complexity: residues 503 to 512 (SSESSCSLPS) and 613 to 625 (SEAS…GSPL). A phosphoserine mark is found at Ser647, Ser650, and Ser652.

The protein belongs to the kizuna family. As to quaternary structure, interacts with AKAP9, CEP72, ODF2, PCNT and TUBGCP2. In terms of processing, phosphorylation at Thr-379 by PLK1 is not needed for centrosomal localization or pericentriolar material expansion but is indispensable for spindle-pole stabilization.

It is found in the cytoplasm. The protein localises to the cytoskeleton. It localises to the microtubule organizing center. The protein resides in the centrosome. Its subcellular location is the cilium basal body. Its function is as follows. Centrosomal protein required for establishing a robust mitotic centrosome architecture that can endure the forces that converge on the centrosomes during spindle formation. Required for stabilizing the expanded pericentriolar material around the centriole. The sequence is that of Centrosomal protein kizuna (KIZ) from Homo sapiens (Human).